A 242-amino-acid polypeptide reads, in one-letter code: MEGWQRAFVLHSRPWSETSLMLDVFTEESGRVRLVAKGARSKRSNLKGALQPFTPLLLRYSGRGEVKTLRSAEAVSLALPLSGITLYSGLYINELLSRVLEYETRFSELFFDYLNCIQALAGTTGSPEPALRRFELALLGHLGYGVNFTHCAGSGERVDDTMTYRYREEKGFFASVVIDNNTFTGRHLKALDAREFPDVDTLRAAKRFTRMALKPYLGGKPLKSRELFRQFMPKRTVKTKKD.

This sequence belongs to the RecO family. Monomer.

Its function is as follows. Involved in DNA repair and RecF pathway recombination. This chain is DNA repair protein RecO, found in Salmonella schwarzengrund (strain CVM19633).